The primary structure comprises 427 residues: Kynureninase (427 aa).

Pyridoxal 5'-phosphate-binding positions include Thr104, Thr105, 132–135 (FPSD), Asp213, His216, and Tyr238. The residue at position 239 (Lys239) is an N6-(pyridoxal phosphate)lysine. The pyridoxal 5'-phosphate site is built by Trp267 and Thr295.

Belongs to the kynureninase family. Homodimer. The cofactor is pyridoxal 5'-phosphate.

It catalyses the reaction L-kynurenine + H2O = anthranilate + L-alanine + H(+). It carries out the reaction 3-hydroxy-L-kynurenine + H2O = 3-hydroxyanthranilate + L-alanine + H(+). The protein operates within amino-acid degradation; L-kynurenine degradation; L-alanine and anthranilate from L-kynurenine: step 1/1. It participates in cofactor biosynthesis; NAD(+) biosynthesis; quinolinate from L-kynurenine: step 2/3. Its function is as follows. Catalyzes the cleavage of L-kynurenine (L-Kyn) and L-3-hydroxykynurenine (L-3OHKyn) into anthranilic acid (AA) and 3-hydroxyanthranilic acid (3-OHAA), respectively. This chain is Kynureninase, found in Shouchella clausii (strain KSM-K16) (Alkalihalobacillus clausii).